Reading from the N-terminus, the 235-residue chain is Effector CFEM1 (235 aa).

An N-terminal signal peptide occupies residues 1-17; it reads MKFSAPVLAIFLASASA. One can recognise a CFEM domain in the interval 18 to 114; that stretch reads QSTAELAAQI…ASASASSSAS (97 aa). 4 disulfides stabilise this stretch: cysteine 30-cysteine 72, cysteine 34-cysteine 67, cysteine 44-cysteine 51, and cysteine 53-cysteine 88. Aspartate 48 contacts heme. The GPI-anchor amidated threonine moiety is linked to residue threonine 211. Positions 212–235 are cleaved as a propeptide — removed in mature form; that stretch reads AAGVKEEASFFIPAAVALFAVFAV.

This sequence belongs to the RBT5 family.

The protein resides in the cell membrane. Its subcellular location is the secreted. The protein localises to the host cytoplasm. It localises to the host nucleus. It is found in the host cell membrane. Functionally, appears to function during host infection, and may play a role in suppressing the host immune response. The polypeptide is Effector CFEM1 (Marssonina brunnea f. sp. multigermtubi (strain MB_m1) (Marssonina leaf spot fungus)).